A 221-amino-acid polypeptide reads, in one-letter code: Deoxyribose-phosphate aldolase (221 aa).

Catalysis depends on Asp96, which acts as the Proton donor/acceptor. Catalysis depends on Lys157, which acts as the Schiff-base intermediate with acetaldehyde. Lys185 (proton donor/acceptor) is an active-site residue.

This sequence belongs to the DeoC/FbaB aldolase family. DeoC type 1 subfamily.

The protein resides in the cytoplasm. It catalyses the reaction 2-deoxy-D-ribose 5-phosphate = D-glyceraldehyde 3-phosphate + acetaldehyde. It functions in the pathway carbohydrate degradation; 2-deoxy-D-ribose 1-phosphate degradation; D-glyceraldehyde 3-phosphate and acetaldehyde from 2-deoxy-alpha-D-ribose 1-phosphate: step 2/2. Its function is as follows. Catalyzes a reversible aldol reaction between acetaldehyde and D-glyceraldehyde 3-phosphate to generate 2-deoxy-D-ribose 5-phosphate. The polypeptide is Deoxyribose-phosphate aldolase (Crocosphaera subtropica (strain ATCC 51142 / BH68) (Cyanothece sp. (strain ATCC 51142))).